The chain runs to 114 residues: Large ribosomal subunit protein P2v (114 aa).

Positions 74-114 (VASGGGGGAAPAAEPASVESKKKEEEKEESEDDGGMMSLFD) are disordered. Ser-103 carries the phosphoserine modification.

The protein belongs to the eukaryotic ribosomal protein P1/P2 family. As to quaternary structure, P1 and P2 exist as dimers at the large ribosomal subunit. Phosphorylated.

Plays an important role in the elongation step of protein synthesis. This is Large ribosomal subunit protein P2v (RPP2E) from Arabidopsis thaliana (Mouse-ear cress).